Reading from the N-terminus, the 446-residue chain is Maltoporin (446 aa).

Residues 1–25 form the signal peptide; the sequence is MMITLRKLPLAVAVAAGVMSAQAMA.

Belongs to the porin LamB (TC 1.B.3) family. As to quaternary structure, homotrimer formed of three 18-stranded antiparallel beta-barrels, containing three independent channels.

It localises to the cell outer membrane. It catalyses the reaction beta-maltose(in) = beta-maltose(out). In terms of biological role, involved in the transport of maltose and maltodextrins. The chain is Maltoporin from Escherichia coli (strain SE11).